A 1203-amino-acid polypeptide reads, in one-letter code: DNA-directed RNA polymerase subunit beta' (1203 aa).

The Zn(2+) site is built by Cys60, Cys62, Cys75, and Cys78. Mg(2+) contacts are provided by Asp449, Asp451, and Asp453. Zn(2+) is bound by residues Cys818, Cys892, Cys899, and Cys902.

Belongs to the RNA polymerase beta' chain family. In terms of assembly, the RNAP catalytic core consists of 2 alpha, 1 beta, 1 beta' and 1 omega subunit. When a sigma factor is associated with the core the holoenzyme is formed, which can initiate transcription. Mg(2+) is required as a cofactor. The cofactor is Zn(2+).

It catalyses the reaction RNA(n) + a ribonucleoside 5'-triphosphate = RNA(n+1) + diphosphate. Its function is as follows. DNA-dependent RNA polymerase catalyzes the transcription of DNA into RNA using the four ribonucleoside triphosphates as substrates. The protein is DNA-directed RNA polymerase subunit beta' of Bacillus cereus (strain ZK / E33L).